The sequence spans 236 residues: Cutinase (236 aa).

A signal peptide spans 1 to 20 (MSLTLFSFLSLVSILCIVTA). Cys-66 and Cys-143 are oxidised to a cystine. Ser-154 acts as the Nucleophile in catalysis. Cys-202 and Cys-209 are disulfide-bonded. Residue Asp-206 is part of the active site. His-218 functions as the Proton donor/acceptor in the catalytic mechanism.

This sequence belongs to the cutinase family. Post-translationally, the 2 disulfide bonds play a critical role in holding the catalytic residues in juxta-position; reduction of the disulfide bridges results in the complete inactivation of the enzyme.

Its subcellular location is the secreted. The enzyme catalyses cutin + H2O = cutin monomers.. Its function is as follows. Catalyzes the hydrolysis of complex carboxylic polyesters found in the cell wall of plants. Degrades cutin, a macromolecule that forms the structure of the plant cuticle. Allows pathogenic fungi to penetrate through the cuticular barrier into the host plant during the initial stage of fungal infection. The chain is Cutinase (CUT1) from Blumeria hordei (Barley powdery mildew).